The following is a 103-amino-acid chain: Small ribosomal subunit protein uS10 (103 aa).

The protein belongs to the universal ribosomal protein uS10 family. In terms of assembly, part of the 30S ribosomal subunit.

Functionally, involved in the binding of tRNA to the ribosomes. In Cutibacterium acnes (strain DSM 16379 / KPA171202) (Propionibacterium acnes), this protein is Small ribosomal subunit protein uS10.